Here is a 455-residue protein sequence, read N- to C-terminus: Aminopeptidase YwaD (455 aa).

The first 31 residues, 1 to 31 (MKKLLTVMTMAVLTAGTLLLPAQSVTPAAHA), serve as a signal peptide directing secretion. Residues H250, D262, E295, D323, and H401 each coordinate Zn(2+).

It belongs to the peptidase M28 family. M28B subfamily. In terms of assembly, monomer. Requires Zn(2+) as cofactor.

It localises to the secreted. The enzyme catalyses Release of N-terminal Arg and Lys from oligopeptides when P1' is not Pro. Also acts on arylamides of Arg and Lys.. It catalyses the reaction Release of an N-terminal amino acid, preferentially leucine, but not glutamic or aspartic acids.. Its function is as follows. Catalyzes the hydrolysis of a range of N-terminal amino acids. The protein is Aminopeptidase YwaD (ywaD) of Bacillus subtilis (strain 168).